A 107-amino-acid chain; its full sequence is Thioredoxin (107 aa).

Residues 2 to 107 (SVSQVTDASF…LASTLNKYIS (106 aa)) enclose the Thioredoxin domain. Catalysis depends on nucleophile residues cysteine 31 and cysteine 34. The cysteines at positions 31 and 34 are disulfide-linked.

This sequence belongs to the thioredoxin family.

It localises to the plastid. It is found in the chloroplast. In terms of biological role, participates in various redox reactions through the reversible oxidation of its active center dithiol to a disulfide and catalyzes dithiol-disulfide exchange reactions. The protein is Thioredoxin (trxA) of Pyropia yezoensis (Susabi-nori).